The following is a 300-amino-acid chain: Forkhead transcription factor fkh-9 (300 aa).

Positions 66–161 (RPSLSYKDLI…DKQTLRRRNR (96 aa)) form a DNA-binding region, fork-head. Positions 153–208 (KQTLRRRNRQQPRALAKKSDAGRTLSRDDRGSSGSGETSPSPSQPSISPPNENPMP) are disordered. Residues 169 to 183 (KKSDAGRTLSRDDRG) show a composition bias toward basic and acidic residues. The segment covering 187-198 (SGETSPSPSQPS) has biased composition (low complexity).

As to expression, expressed in mechanosensory neurons.

It is found in the nucleus. Functionally, transcription factor. Binds to the regulatory elements of genes that contain the sequence motif 5'-TTGTTTCT-3'. Involved in regulating intestinal transcription of vitellogenin vit-2, acting in concert with transcription factors elt-2, mab-3 and daf-16, and also the TGF-beta/Sma/Mab pathway. Functions downstream of the insulin/IGF-1-like signaling (IIS) mediated pathway, in regeneration of axons after injury and in short-term memory, perhaps acting in neurons, and in modulation of longevity, perhaps acting non-neuronally. Plays a role in the modulation of endoplasmic reticulum (ER) homeostasis during chemical and pathogen stress, including exposure to the Gram-negative bacterium P.aeruginosa. In Caenorhabditis elegans, this protein is Forkhead transcription factor fkh-9.